Consider the following 271-residue polypeptide: Neurexophilin-1 (271 aa).

An N-terminal signal peptide occupies residues 1-21 (MQAACWYVLLLLQPTIYLVTC). Residues 22-97 (ANLTNGGKSE…WDWLRNSTDL (76 aa)) form an II region. Asn23, Asn68, Asn93, Asn146, Asn156, and Asn162 each carry an N-linked (GlcNAc...) asparagine glycan. Residues 98-176 (QEPRPRAKRR…LVPPTKIVEF (79 aa)) are III. An IV (linker domain) region spans residues 177–185 (DLAQQTVID). The segment at 186–271 (AKDSKSFNCR…HSDTPYFPSG (86 aa)) is v (Cys-rich).

It belongs to the neurexophilin family.

Its subcellular location is the secreted. Its function is as follows. May be signaling molecules that resemble neuropeptides and that act by binding to alpha-neurexins and possibly other receptors. The protein is Neurexophilin-1 (NXPH1) of Pongo abelii (Sumatran orangutan).